Here is a 475-residue protein sequence, read N- to C-terminus: Beta-amyrin 6-beta-monooxygenase (475 aa).

The chain crosses the membrane as a helical span at residues 6–22 (LYSLAFALVYISLYFIF). Cys423 is a binding site for heme.

Belongs to the cytochrome P450 family. Requires heme as cofactor. In terms of tissue distribution, specifically expressed in roots.

The protein resides in the membrane. The catalysed reaction is beta-amyrin + reduced [NADPH--hemoprotein reductase] + O2 = daturadiol + oxidized [NADPH--hemoprotein reductase] + H2O + H(+). In terms of biological role, catalyzes the C-6 beta-hydroxylation of beta-amyrin to form daturadiol. Catalyzes the C-6 beta-hydroxylation of alpha-amyrin to form 6-beta-hydroxy-alpha-amyrin. The chain is Beta-amyrin 6-beta-monooxygenase from Solanum lycopersicum (Tomato).